The primary structure comprises 271 residues: Putative phosphoenolpyruvate synthase regulatory protein (271 aa).

An ADP-binding site is contributed by 151-158; sequence GVSRSGKT.

Belongs to the pyruvate, phosphate/water dikinase regulatory protein family. PSRP subfamily.

It catalyses the reaction [pyruvate, water dikinase] + ADP = [pyruvate, water dikinase]-phosphate + AMP + H(+). The enzyme catalyses [pyruvate, water dikinase]-phosphate + phosphate + H(+) = [pyruvate, water dikinase] + diphosphate. Functionally, bifunctional serine/threonine kinase and phosphorylase involved in the regulation of the phosphoenolpyruvate synthase (PEPS) by catalyzing its phosphorylation/dephosphorylation. This is Putative phosphoenolpyruvate synthase regulatory protein from Paraburkholderia xenovorans (strain LB400).